The following is a 125-amino-acid chain: MPTKNQLIRHGREEKQRTDRTRASDQCPQKQGVCLRVSTRTPKKPNSALRKIAKVRLSNRHDIFAHIPGEGHNSQEHSIVLVRGGRVKDSPGVKSHRIRGVKDLLGIPDRRKGRSKYGAERPKSK.

2 disordered regions span residues 1-29 (MPTKNQLIRHGREEKQRTDRTRASDQCPQ) and 105-125 (LGIPDRRKGRSKYGAERPKSK). Basic and acidic residues predominate over residues 10–23 (HGREEKQRTDRTRA).

It belongs to the universal ribosomal protein uS12 family.

Its subcellular location is the mitochondrion. Protein S12 is involved in the translation initiation step. This is Small ribosomal subunit protein uS12m (RPS12) from Oryza sativa subsp. japonica (Rice).